The primary structure comprises 373 residues: Nuclear migration protein JNM1 (373 aa).

The segment at 33–53 is disordered; the sequence is EVKEDGQQEEQEEASSRKDGL. S91 carries the phosphoserine modification. Coiled-coil stretches lie at residues 114-139, 200-245, and 331-367; these read KIENLTSEMQTEIKELCEIQSKLATE, EDRK…EFEN, and WLKALNELDKKFDEQEVKIRENMEQIRRKIDTLEDEA.

As to quaternary structure, component of the dynactin complex composed of at least ARP1, JNM1, NIP100 and ARP10. Dynactin comprises a short rod of ARP1 polymers attached to ARP10 at its pointed-end and probably associated with the capping protein at its barbed-end. The rod structure is implicated in dynein cargo binding. A sidearm formed by NIP100 projects from the ARP1 filament and is implicated in motor binding. Interacts with ARP1.

It localises to the cytoplasm. Its subcellular location is the cytoskeleton. Its function is as follows. Component of the dynactin complex which assists cytoplasmic dynein by increasing its processivity and by regulation of its cargo binding. The dynactin complex is required for the spindle translocation late in anaphase and is involved in a cell wall synthesis checkpoint. JNM1 is associated with the rod and links it to the projecting sidearm. Required for proper nuclear migration during the mitotic cell cycle and for astral microtubule development. This Saccharomyces cerevisiae (strain ATCC 204508 / S288c) (Baker's yeast) protein is Nuclear migration protein JNM1 (JNM1).